Reading from the N-terminus, the 235-residue chain is 2-C-methyl-D-erythritol 4-phosphate cytidylyltransferase (235 aa).

It belongs to the IspD/TarI cytidylyltransferase family. IspD subfamily.

The enzyme catalyses 2-C-methyl-D-erythritol 4-phosphate + CTP + H(+) = 4-CDP-2-C-methyl-D-erythritol + diphosphate. The protein operates within isoprenoid biosynthesis; isopentenyl diphosphate biosynthesis via DXP pathway; isopentenyl diphosphate from 1-deoxy-D-xylulose 5-phosphate: step 2/6. Its function is as follows. Catalyzes the formation of 4-diphosphocytidyl-2-C-methyl-D-erythritol from CTP and 2-C-methyl-D-erythritol 4-phosphate (MEP). The sequence is that of 2-C-methyl-D-erythritol 4-phosphate cytidylyltransferase from Pseudomonas putida (strain ATCC 47054 / DSM 6125 / CFBP 8728 / NCIMB 11950 / KT2440).